The following is a 742-amino-acid chain: UPF0313 protein MA_4618 (742 aa).

The interval 1-125 (MGVRKQTMVK…SFSSSLPASK (125 aa)) is disordered. The unknown stretch occupies residues 1-128 (MGVRKQTMVK…SSLPASKFLP (128 aa)). 2 stretches are compositionally biased toward basic and acidic residues: residues 17–40 (ENKK…ERAG) and 49–73 (KKVE…KAEG). Positions 106–115 (TGKKEKKQKK) are enriched in basic residues. Positions 129 to 742 (MSPEEVKARG…KCLIRRKEKQ (614 aa)) are UPF0313. Residues 438–707 (ALEMVKFSLT…AMQRALMHYR (270 aa)) enclose the Radical SAM core domain. [4Fe-4S] cluster contacts are provided by cysteine 452, cysteine 456, and cysteine 459.

The protein in the C-terminal section; belongs to the UPF0313 family. [4Fe-4S] cluster is required as a cofactor.

This is UPF0313 protein MA_4618 from Methanosarcina acetivorans (strain ATCC 35395 / DSM 2834 / JCM 12185 / C2A).